A 376-amino-acid polypeptide reads, in one-letter code: Carbamoyl phosphate synthase small chain (376 aa).

Residues 1–183 are CPSase; sequence MENILLNKAL…IYKKKYIEKN (183 aa). Residues Ser-51, Gly-235, and Gly-237 each coordinate L-glutamine. Positions 187–374 constitute a Glutamine amidotransferase type-1 domain; that stretch reads NIVAYDFGIK…INLVKDYRLN (188 aa). The active-site Nucleophile is the Cys-263. The L-glutamine site is built by Leu-264, Gln-267, Asn-305, and Phe-308. Catalysis depends on residues His-347 and Glu-349.

Belongs to the CarA family. Composed of two chains; the small (or glutamine) chain promotes the hydrolysis of glutamine to ammonia, which is used by the large (or ammonia) chain to synthesize carbamoyl phosphate. Tetramer of heterodimers (alpha,beta)4.

The enzyme catalyses hydrogencarbonate + L-glutamine + 2 ATP + H2O = carbamoyl phosphate + L-glutamate + 2 ADP + phosphate + 2 H(+). It catalyses the reaction L-glutamine + H2O = L-glutamate + NH4(+). The protein operates within amino-acid biosynthesis; L-arginine biosynthesis; carbamoyl phosphate from bicarbonate: step 1/1. It participates in pyrimidine metabolism; UMP biosynthesis via de novo pathway; (S)-dihydroorotate from bicarbonate: step 1/3. Its function is as follows. Small subunit of the glutamine-dependent carbamoyl phosphate synthetase (CPSase). CPSase catalyzes the formation of carbamoyl phosphate from the ammonia moiety of glutamine, carbonate, and phosphate donated by ATP, constituting the first step of 2 biosynthetic pathways, one leading to arginine and/or urea and the other to pyrimidine nucleotides. The small subunit (glutamine amidotransferase) binds and cleaves glutamine to supply the large subunit with the substrate ammonia. This Wigglesworthia glossinidia brevipalpis protein is Carbamoyl phosphate synthase small chain.